The following is a 224-amino-acid chain: Ribonuclease HII (224 aa).

One can recognise an RNase H type-2 domain in the interval 7 to 217 (STIMGIDEAG…SNAVIADCLQ (211 aa)). Residues Asp-13, Glu-14, and Asp-111 each contribute to the a divalent metal cation site.

This sequence belongs to the RNase HII family. Mn(2+) is required as a cofactor. Requires Mg(2+) as cofactor.

The protein resides in the cytoplasm. The catalysed reaction is Endonucleolytic cleavage to 5'-phosphomonoester.. Functionally, endonuclease that specifically degrades the RNA of RNA-DNA hybrids. The protein is Ribonuclease HII of Methanocella arvoryzae (strain DSM 22066 / NBRC 105507 / MRE50).